Consider the following 146-residue polypeptide: Hemoglobin subunit theta (146 aa).

Positions 2–146 (HFTAEEKSVI…VATALAHKYH (145 aa)) constitute a Globin domain. His-63 and His-92 together coordinate heme b.

Belongs to the globin family.

The chain is Hemoglobin subunit theta from Sus scrofa (Pig).